A 797-amino-acid chain; its full sequence is Striatin-3 (797 aa).

N-acetylmethionine is present on methionine 1. Composition is skewed to gly residues over residues 1-12 (MDELAGGGGGGP) and 33-43 (GGNGAAGGGGP). The tract at residues 1-60 (MDELAGGGGGGPAMASPPRQQQGPGGNMSLSPGGNGAAGGGGPPATEGAGPAAGPELSRP) is disordered. Positions 44–55 (PATEGAGPAAGP) are enriched in low complexity. Residues 71–79 (YIQHEWARF) form a caveolin-binding region. Residues 77–136 (ARFEMERAHWEVERAELQARIAFLQGERKGQENLKKDLVRRIKMLEYALKQERAKYHKLK) are a coiled coil. Residue threonine 150 is modified to Phosphothreonine. Positions 166–183 (QNSQLTWKQGRQLLRQYL) are calmodulin-binding. Residues serine 202, serine 214, serine 229, serine 257, and serine 335 each carry the phosphoserine modification. The tract at residues 313-336 (DGEGAGEARSSGDGTEWDKDDLSP) is disordered. WD repeat units follow at residues 478 to 517 (SHFDGVRALAFHPVEPVLVTASEDHTLKLWNLQKTVPAKK), 531 to 570 (AHIGPVLSLAISSNGEQCFSGGTDATIQWWNMPSPNVDPY), 584 to 623 (AHTDAVWGLAYSGIKNQLLSCSADGTVRLWNPQEKLPCIC), 679 to 718 (QSSNHINRVVSHPTLPVTITAHEDRHIKFFDNKTGKMIHS), 721 to 760 (AHLDAVTSLAVDPNGIYLMSGSHDCSIRLWNLDSKTCVQE), and 767 to 796 (KLDESIYDVAFHPSKAYIASAGADALAKVF).

Belongs to the WD repeat striatin family. In terms of assembly, tetramerizes. Part of the core of STRIPAK complexes composed of PP2A catalytic and scaffolding subunits, the striatins (PP2A regulatory subunits), the striatin-associated proteins MOB4, STRIP1 and STRIP2, PDCD10 and members of the STE20 kinases, such as STK24 and STK26. The STRIPAK complex can be extended by adapter proteins such as SLMAP:SIKE1 or CTTNBP2NL. Interacts with CDC42BPB.

It is found in the cytoplasm. The protein localises to the membrane. Functionally, calmodulin-binding scaffolding protein which is the center of the striatin-interacting phosphatase and kinase (STRIPAK) complexes. STRIPAK complexes have critical roles in protein (de)phosphorylation and are regulators of multiple signaling pathways including Hippo, MAPK, nuclear receptor and cytoskeleton remodeling. Different types of STRIPAK complexes are involved in a variety of biological processes such as cell growth, differentiation, apoptosis, metabolism and immune regulation. This Bos taurus (Bovine) protein is Striatin-3 (STRN3).